The primary structure comprises 250 residues: Probable transcriptional regulatory protein Plut_1643 (250 aa).

It belongs to the TACO1 family.

The protein resides in the cytoplasm. The chain is Probable transcriptional regulatory protein Plut_1643 from Chlorobium luteolum (strain DSM 273 / BCRC 81028 / 2530) (Pelodictyon luteolum).